Reading from the N-terminus, the 471-residue chain is ATP synthase subunit beta (471 aa).

Position 153 to 160 (153 to 160) interacts with ATP; it reads GGAGVGKT.

This sequence belongs to the ATPase alpha/beta chains family. As to quaternary structure, F-type ATPases have 2 components, CF(1) - the catalytic core - and CF(0) - the membrane proton channel. CF(1) has five subunits: alpha(3), beta(3), gamma(1), delta(1), epsilon(1). CF(0) has four main subunits: a(1), b(1), b'(1) and c(9-12).

The protein resides in the cell inner membrane. It carries out the reaction ATP + H2O + 4 H(+)(in) = ADP + phosphate + 5 H(+)(out). Functionally, produces ATP from ADP in the presence of a proton gradient across the membrane. The catalytic sites are hosted primarily by the beta subunits. The chain is ATP synthase subunit beta from Methylibium petroleiphilum (strain ATCC BAA-1232 / LMG 22953 / PM1).